The primary structure comprises 344 residues: Adenine deaminase (344 aa).

Positions 24, 26, and 204 each coordinate Zn(2+). Glutamate 207 (proton donor) is an active-site residue. Residue aspartate 285 participates in Zn(2+) binding. Substrate is bound at residue aspartate 286.

Belongs to the metallo-dependent hydrolases superfamily. Adenosine and AMP deaminases family. Adenine deaminase type 2 subfamily. The cofactor is Zn(2+).

The enzyme catalyses adenine + H2O + H(+) = hypoxanthine + NH4(+). In terms of biological role, catalyzes the hydrolytic deamination of adenine to hypoxanthine. Plays an important role in the purine salvage pathway and in nitrogen catabolism. This chain is Adenine deaminase, found in Caulobacter vibrioides (strain ATCC 19089 / CIP 103742 / CB 15) (Caulobacter crescentus).